A 485-amino-acid polypeptide reads, in one-letter code: Adenylate kinase 8 (485 aa).

2 adenylate kinase regions span residues 58–258 (PRVF…TFVL) and 269–471 (PRIL…SYIV). 67 to 72 (ASGKHT) provides a ligand contact to ATP. The tract at residues 87–113 (TPENVLSSDVSLLVKEAQSYRDKGQEV) is NMP 1. AMP-binding positions include 140–143 (GFPK) and Gln147. Positions 177–206 (GKRIDITDGEVYHTTFDWPSDPAVQRNLVE) are LID 1. Arg218 lines the AMP pocket. An ATP-binding site is contributed by 278 to 283 (GSGRSL). The interval 298 to 327 (CCGQVLKEAVADQTKLGELIQPYIENDQQV) is NMP 2. Residues 325 to 327 (QQV), 354 to 357 (GFPQ), and Gln361 contribute to the AMP site. The segment at 391 to 424 (LCMTDPVSGERYHSIYKPAPRSEVQERLQQNPKY) is LID 2. Arg432 serves as a coordination point for AMP.

It belongs to the adenylate kinase family.

The protein resides in the cytoplasm. Its subcellular location is the cytosol. The catalysed reaction is AMP + ATP = 2 ADP. It catalyses the reaction a 2'-deoxyribonucleoside 5'-diphosphate + ATP = a 2'-deoxyribonucleoside 5'-triphosphate + ADP. The enzyme catalyses a ribonucleoside 5'-diphosphate + ATP = a ribonucleoside 5'-triphosphate + ADP. Its function is as follows. Nucleoside monophosphate (NMP) kinase that catalyzes the reversible transfer of the terminal phosphate group between nucleoside triphosphates and monophosphates. Has highest activity toward AMP, and weaker activity toward dAMP, CMP and dCMP. Also displays broad nucleoside diphosphate kinase activity. The polypeptide is Adenylate kinase 8 (ak8) (Xenopus laevis (African clawed frog)).